Consider the following 198-residue polypeptide: Nucleoid occlusion factor SlmA (198 aa).

The HTH tetR-type domain maps to 10 to 70; the sequence is NRREEILQSL…SLIEFIEDSL (61 aa). The segment at residues 33 to 52 is a DNA-binding region (H-T-H motif); it reads TTAKLAASVGVSEAALYRHF. Residues 117 to 144 adopt a coiled-coil conformation; sequence EQDRLQGRINQLFERIEAQLRQVLREKR.

It belongs to the nucleoid occlusion factor SlmA family. As to quaternary structure, homodimer. Interacts with FtsZ.

It localises to the cytoplasm. The protein localises to the nucleoid. Functionally, required for nucleoid occlusion (NO) phenomenon, which prevents Z-ring formation and cell division over the nucleoid. Acts as a DNA-associated cell division inhibitor that binds simultaneously chromosomal DNA and FtsZ, and disrupts the assembly of FtsZ polymers. SlmA-DNA-binding sequences (SBS) are dispersed on non-Ter regions of the chromosome, preventing FtsZ polymerization at these regions. The polypeptide is Nucleoid occlusion factor SlmA (Salmonella typhi).